The sequence spans 160 residues: Type IV major fimbrial protein FimA (160 aa).

Positions 1-7 (MKSLQKG) are cleaved as a propeptide — leader sequence. F8 carries the post-translational modification N-methylphenylalanine. The chain crosses the membrane as a helical span at residues 8–28 (FTLIELMIVVAIIGILAAFAI). A disulfide bridge connects residues C63 and C105.

The protein belongs to the N-Me-Phe pilin family. The pili are polar flexible filaments of about 5.4 nanometers diameter and 2.5 micrometers average length; they consist of only a single polypeptide chain arranged in a helical configuration of five subunits per turn in the assembled pilus.

The protein resides in the fimbrium. It is found in the membrane. Functionally, major component of the type IV fimbriae that plays an essential role in twitching motility, natural transformation, and protease secretion. This Dichelobacter nodosus (Bacteroides nodosus) protein is Type IV major fimbrial protein FimA (fimA).